The chain runs to 620 residues: UDP-glucose:protein N-beta-glucosyltransferase (620 aa).

The protein belongs to the glycosyltransferase 41 family.

It localises to the cytoplasm. It carries out the reaction L-asparaginyl-[protein] + UDP-alpha-D-glucose = N(4)-(beta-D-glucosyl)-L-asparaginyl-[protein] + UDP + H(+). It functions in the pathway protein modification; protein glycosylation. Its function is as follows. Inverting glycosyltransferase that catalyzes the transfer of one glucose moiety from UDP-glucose to an asparagine residue in peptides and proteins containing the NX(S/T) motif, resulting in their modification with a beta-linked 1,N-glucose. Likely acts as a key component of a general protein glycosylation system. In Actinobacillus pleuropneumoniae serotype 5b (strain L20), this protein is UDP-glucose:protein N-beta-glucosyltransferase.